The primary structure comprises 263 residues: Ribosomal RNA small subunit methyltransferase J (263 aa).

S-adenosyl-L-methionine contacts are provided by residues 115–116 (RD), 131–132 (ER), and Asp181.

The protein belongs to the methyltransferase superfamily. RsmJ family.

It is found in the cytoplasm. The enzyme catalyses guanosine(1516) in 16S rRNA + S-adenosyl-L-methionine = N(2)-methylguanosine(1516) in 16S rRNA + S-adenosyl-L-homocysteine + H(+). Functionally, specifically methylates the guanosine in position 1516 of 16S rRNA. In Hahella chejuensis (strain KCTC 2396), this protein is Ribosomal RNA small subunit methyltransferase J.